The following is a 354-amino-acid chain: Uroporphyrinogen decarboxylase (354 aa).

Substrate-binding positions include 27–31, aspartate 77, tyrosine 154, threonine 209, and histidine 327; that span reads RQAGR.

This sequence belongs to the uroporphyrinogen decarboxylase family. In terms of assembly, homodimer.

Its subcellular location is the cytoplasm. The enzyme catalyses uroporphyrinogen III + 4 H(+) = coproporphyrinogen III + 4 CO2. It participates in porphyrin-containing compound metabolism; protoporphyrin-IX biosynthesis; coproporphyrinogen-III from 5-aminolevulinate: step 4/4. Functionally, catalyzes the decarboxylation of four acetate groups of uroporphyrinogen-III to yield coproporphyrinogen-III. The sequence is that of Uroporphyrinogen decarboxylase from Enterobacter sp. (strain 638).